We begin with the raw amino-acid sequence, 149 residues long: Transcriptional repressor NrdR (149 aa).

A zinc finger lies at 3-34 (CPFCGTQDTKVIDSRLVADGASVRRRRECNHC). One can recognise an ATP-cone domain in the interval 49 to 139 (PRVIKTDGSR…VYRSFEDIRE (91 aa)).

Belongs to the NrdR family. It depends on Zn(2+) as a cofactor.

In terms of biological role, negatively regulates transcription of bacterial ribonucleotide reductase nrd genes and operons by binding to NrdR-boxes. In Idiomarina loihiensis (strain ATCC BAA-735 / DSM 15497 / L2-TR), this protein is Transcriptional repressor NrdR.